Consider the following 477-residue polypeptide: ATP synthase subunit beta (477 aa).

ATP is bound at residue 163 to 170 (GGAGVGKT).

Belongs to the ATPase alpha/beta chains family. F-type ATPases have 2 components, CF(1) - the catalytic core - and CF(0) - the membrane proton channel. CF(1) has five subunits: alpha(3), beta(3), gamma(1), delta(1), epsilon(1). CF(0) has four main subunits: a(1), b(1), b'(1) and c(9-12).

The protein resides in the cellular thylakoid membrane. The catalysed reaction is ATP + H2O + 4 H(+)(in) = ADP + phosphate + 5 H(+)(out). Its function is as follows. Produces ATP from ADP in the presence of a proton gradient across the membrane. The catalytic sites are hosted primarily by the beta subunits. The protein is ATP synthase subunit beta of Synechococcus sp. (strain JA-2-3B'a(2-13)) (Cyanobacteria bacterium Yellowstone B-Prime).